The chain runs to 1509 residues: Putative endo-alpha-N-acetylgalactosaminidase (1509 aa).

Residues M1 to A41 form the signal peptide. Residues D288, N290, D292, K294, and D299 each coordinate Ca(2+). The interval G313–Q585 is catalytic. Residue D369 coordinates substrate. Residue D472 is the Nucleophile of the active site. Catalysis depends on E498, which acts as the Proton donor/acceptor. 4 residues coordinate Ca(2+): N878, E880, D926, and Y929. Disordered regions lie at residues N1176–P1197 and I1403–G1439. Low complexity predominate over residues N1407–T1428. Residues G1429 to G1439 are compositionally biased toward gly residues. The LPXTG sorting signal signature appears at L1475 to G1479. T1478 bears the Pentaglycyl murein peptidoglycan amidated threonine mark. The propeptide at G1479–S1509 is removed by sortase.

The protein belongs to the glycosyl hydrolase 101 family. A subfamily.

It is found in the secreted. The protein resides in the cell wall. The catalysed reaction is a 3-O-[beta-D-galactosyl-(1-&gt;3)-N-acetyl-alpha-D-galactosaminyl]-L-threonyl-[protein] + H2O = beta-D-galactosyl-(1-&gt;3)-N-acetyl-D-galactosamine + L-threonyl-[protein]. The enzyme catalyses a 3-O-[beta-D-galactosyl-(1-&gt;3)-N-acetyl-alpha-D-galactosaminyl]-L-seryl-[protein] + H2O = beta-D-galactosyl-(1-&gt;3)-N-acetyl-D-galactosamine + L-seryl-[protein]. Probably involved in the breakdown of mucin-type O-linked glycans. Specifically removes the T-antigen disaccharide (Gal-beta-1,3-GalNAc-alpha) from extracellular host glycoproteins. This is Putative endo-alpha-N-acetylgalactosaminidase from Renibacterium salmoninarum (strain ATCC 33209 / DSM 20767 / JCM 11484 / NBRC 15589 / NCIMB 2235).